Consider the following 736-residue polypeptide: Dynamin-1-like protein (736 aa).

Met-1 carries the N-acetylmethionine modification. The region spanning 22 to 302 is the Dynamin-type G domain; it reads IIQLPQIVVV…LMHHIRDCLP (281 aa). The segment at 32–39 is G1 motif; that stretch reads GTQSSGKS. 32-40 provides a ligand contact to GTP; it reads GTQSSGKSS. The interval 58–60 is G2 motif; that stretch reads VTR. Residues 146-149 form a G3 motif region; it reads DLPG. A G4 motif region spans residues 215 to 218; that stretch reads TKLD. GTP is bound by residues 215–221 and 246–249; these read TKLDLMD and NRSQ. Positions 245 to 248 are G5 motif; it reads VNRS. The tract at residues 344 to 489 is middle domain; the sequence is YCNTIEGTAK…NEMVHNLVAI (146 aa). The interval 448–685 is interaction with GSK3B; the sequence is NYSTQELLRF…NHVKDTLQSE (238 aa). A b domain region spans residues 502 to 569; it reads ADACGLMNNN…IQDNRRETKN (68 aa). Residues 522–554 form a disordered region; it reads RELPSAGSRDKSSKVPSALAPASQEPPPAASAE. Phosphoserine is present on Ser-529. Glycyl lysine isopeptide (Lys-Gly) (interchain with G-Cter in SUMO) cross-links involve residues Lys-532, Lys-535, Lys-558, and Lys-568. Positions 542–736 are C-terminal dimerization domain; that stretch reads PASQEPPPAA…IAEIRETHLW (195 aa). The interval 566-588 is disordered; that stretch reads ETKNVPSAGGGIGDGGQEPTTGN. O-linked (GlcNAc) threonine glycans are attached at residues Thr-585 and Thr-586. Lys-594 participates in a covalent cross-link: Glycyl lysine isopeptide (Lys-Gly) (interchain with G-Cter in SUMO). Lys-597 bears the N6-acetyllysine; alternate mark. Lys-597 is covalently cross-linked (Glycyl lysine isopeptide (Lys-Gly) (interchain with G-Cter in SUMO); alternate). Residue Lys-606 forms a Glycyl lysine isopeptide (Lys-Gly) (interchain with G-Cter in SUMO) linkage. Position 607 is a phosphoserine (Ser-607). Lys-608 is covalently cross-linked (Glycyl lysine isopeptide (Lys-Gly) (interchain with G-Cter in SUMO)). Phosphoserine; by PINK1 is present on Ser-616. Ser-637 carries the phosphoserine; by CAMK1 and PKA modification. Cys-644 bears the S-nitrosocysteine mark. The region spanning 644–735 is the GED domain; sequence CEVIERLIKS…IIAEIRETHL (92 aa). Residues 654 to 668 are important for homodimerization; the sequence is YFLIVRKNIQDSVPK.

The protein belongs to the TRAFAC class dynamin-like GTPase superfamily. Dynamin/Fzo/YdjA family. As to quaternary structure, homotetramer; dimerizes through the N-terminal GTP-middle region of one molecule binding to the GED domain of another DNM1L molecule. Oligomerizes in a GTP-dependent manner to form membrane-associated tubules with a spiral pattern. Interacts with GSK3B and MARCHF5. Interacts (via the GTPase and B domains) with UBE2I; the interaction promotes sumoylation of DNM1L, mainly in its B domain. Interacts with PPP3CA; the interaction dephosphorylates DNM1L and regulates its transition to mitochondria. Interacts with BCL2L1 isoform BCL-X(L) and CLTA; DNM1L and BCL2L1 isoform BCL-X(L) may form a complex in synaptic vesicles that also contains clathrin and MFF. Interacts with MFF; the interaction is inhibited by C11orf65/MFI. Interacts with FIS1. Interacts with MIEF2 and MIEF1; GTP-dependent, regulates GTP hydrolysis and DNM1L oligomerization. Interacts with PGAM5; this interaction leads to dephosphorylation at Ser-656 and activation of GTPase activity and eventually to mitochondria fragmentation. Interacts with RALBP1; during mitosis, recruits DNM1L to the mitochondrion and mediates its activation by the mitotic kinase cyclin B-CDK1. Interacts with FUNDC1; this interaction recruits DNM1L/DRP1 at ER-mitochondria contact sites. In terms of processing, phosphorylation/dephosphorylation events on two sites near the GED domain regulate mitochondrial fission. Phosphorylation on Ser-637 inhibits mitochondrial fission probably through preventing intramolecular interaction. Dephosphorylated on this site by PPP3CA which promotes mitochondrial fission. Phosphorylation on Ser-616 by Pink1 activates the GTPase activity and promotes mitochondrial fission. Phosphorylated in a circadian manner at Ser-637. Dephosphorylated by PGAM5. Sumoylated on various lysine residues within the B domain, probably by MUL1. Sumoylation positively regulates mitochondrial fission. Desumoylated by SENP5 during G2/M transition of mitosis. Appears to be linked to its catalytic activity. Post-translationally, S-nitrosylation increases DNM1L dimerization, mitochondrial fission and causes neuronal damage. In terms of processing, O-GlcNAcylation augments the level of the GTP-bound active form of DNM1L and induces translocation from the cytoplasm to mitochondria in cardiomyocytes. It also decreases phosphorylation at Ser-637. Ubiquitination by MARCHF5 affects mitochondrial morphology. As to expression, expressed in the cerebellum and in several regions of the cerebrum and diencephalon. Strongly expressed in the cerebellar Purkinje cells and in the pontile giant neurons. In terms of tissue distribution, widely expressed. Brain-specific. As to expression, brain-specific (at protein level). Expressed in most of the subregions of the brain, including the cerebellum, midbrain, hippocampus, striatum, cerebral cortex, and brain stem. Weakly expressed in the olfactory bulb.

The protein resides in the cytoplasm. It localises to the cytosol. Its subcellular location is the golgi apparatus. It is found in the endomembrane system. The protein localises to the mitochondrion outer membrane. The protein resides in the peroxisome. It localises to the membrane. Its subcellular location is the clathrin-coated pit. It is found in the cytoplasmic vesicle. The protein localises to the secretory vesicle. The protein resides in the synaptic vesicle membrane. It localises to the lysosome. Its subcellular location is the late endosome. It is found in the cell membrane. The protein localises to the postsynaptic density. The catalysed reaction is GTP + H2O = GDP + phosphate + H(+). Its function is as follows. Functions in mitochondrial and peroxisomal division. Mediates membrane fission through oligomerization into membrane-associated tubular structures that wrap around the scission site to constrict and sever the mitochondrial membrane through a GTP hydrolysis-dependent mechanism. The specific recruitment at scission sites is mediated by membrane receptors like MFF, MIEF1 and MIEF2 for mitochondrial membranes. While the recruitment by the membrane receptors is GTP-dependent, the following hydrolysis of GTP induces the dissociation from the receptors and allows DNM1L filaments to curl into closed rings that are probably sufficient to sever a double membrane. Acts downstream of PINK1 to promote mitochondrial fission in a PRKN-dependent manner. Plays an important role in mitochondrial fission during mitosis. Required for formation of endocytic vesicles. Through its function in mitochondrial division, ensures the survival of at least some types of postmitotic neurons, including Purkinje cells, by suppressing oxidative damage. Required for normal brain development, including that of cerebellum. Facilitates developmentally regulated apoptosis during neural tube formation. Required for a normal rate of cytochrome c release and caspase activation during apoptosis; this requirement may depend upon the cell type and the physiological apoptotic cues. Proposed to regulate synaptic vesicle membrane dynamics through association with BCL2L1 isoform Bcl-X(L) which stimulates its GTPase activity in synaptic vesicles; the function may require its recruitment by MFF to clathrin-containing vesicles. Required for programmed necrosis execution. Rhythmic control of its activity following phosphorylation at Ser-637 is essential for the circadian control of mitochondrial ATP production. Regulates postsynaptic clathrin-mediated endocytosis by positioning the endocytic zone at the postsynaptic density, independently of mitochondrial division. The protein is Dynamin-1-like protein of Mus musculus (Mouse).